The primary structure comprises 154 residues: 6,7-dimethyl-8-ribityllumazine synthase (154 aa).

Residues Phe22, 56-58, and 80-82 each bind 5-amino-6-(D-ribitylamino)uracil; these read AFE and TVI. 85 to 86 provides a ligand contact to (2S)-2-hydroxy-3-oxobutyl phosphate; the sequence is ST. His88 functions as the Proton donor in the catalytic mechanism. A 5-amino-6-(D-ribitylamino)uracil-binding site is contributed by Phe113. Arg127 is a binding site for (2S)-2-hydroxy-3-oxobutyl phosphate.

Belongs to the DMRL synthase family.

The catalysed reaction is (2S)-2-hydroxy-3-oxobutyl phosphate + 5-amino-6-(D-ribitylamino)uracil = 6,7-dimethyl-8-(1-D-ribityl)lumazine + phosphate + 2 H2O + H(+). The protein operates within cofactor biosynthesis; riboflavin biosynthesis; riboflavin from 2-hydroxy-3-oxobutyl phosphate and 5-amino-6-(D-ribitylamino)uracil: step 1/2. Functionally, catalyzes the formation of 6,7-dimethyl-8-ribityllumazine by condensation of 5-amino-6-(D-ribitylamino)uracil with 3,4-dihydroxy-2-butanone 4-phosphate. This is the penultimate step in the biosynthesis of riboflavin. The sequence is that of 6,7-dimethyl-8-ribityllumazine synthase from Lactococcus lactis subsp. lactis (strain IL1403) (Streptococcus lactis).